A 252-amino-acid polypeptide reads, in one-letter code: Thiazole synthase (252 aa).

The active-site Schiff-base intermediate with DXP is K98. 1-deoxy-D-xylulose 5-phosphate is bound by residues G159, 185–186 (AG), and 207–208 (AS).

Belongs to the ThiG family. As to quaternary structure, homotetramer. Forms heterodimers with either ThiH or ThiS.

The protein resides in the cytoplasm. It carries out the reaction [ThiS sulfur-carrier protein]-C-terminal-Gly-aminoethanethioate + 2-iminoacetate + 1-deoxy-D-xylulose 5-phosphate = [ThiS sulfur-carrier protein]-C-terminal Gly-Gly + 2-[(2R,5Z)-2-carboxy-4-methylthiazol-5(2H)-ylidene]ethyl phosphate + 2 H2O + H(+). It participates in cofactor biosynthesis; thiamine diphosphate biosynthesis. In terms of biological role, catalyzes the rearrangement of 1-deoxy-D-xylulose 5-phosphate (DXP) to produce the thiazole phosphate moiety of thiamine. Sulfur is provided by the thiocarboxylate moiety of the carrier protein ThiS. In vitro, sulfur can be provided by H(2)S. In Mycobacterium tuberculosis (strain ATCC 25177 / H37Ra), this protein is Thiazole synthase.